We begin with the raw amino-acid sequence, 126 residues long: Cysteine-rich tail protein 1 (126 aa).

The segment at methionine 1–proline 89 is disordered.

It belongs to the CYSRT1 family. In terms of assembly, interacts with components of the late cornfied envelope (LCE).

The protein localises to the cornified envelope. Its function is as follows. Component of the stratum corneum that may contribute to epidermal antimicrobial host defenses. The protein is Cysteine-rich tail protein 1 (CYSRT1) of Bos taurus (Bovine).